A 760-amino-acid polypeptide reads, in one-letter code: MPTFAQPVPDDIVASSGLRSKFRPHVHGNYQICVEPSKGMETFYNDAMSTQLESKTLADIPGLGLVHPMALAMANCLPERLPAITRFADFTILNDDYYDIAKRDEIEKVNSDIQNALQDASVPGSKTQSSAGSDKDFKPKQMQAALVLELIMLDQQLAMDIMSSYSQGLDVATFAPDNLRTLDEYLPVRKVNSGLDVTAEMVCFGMGLRISPSDKAKLRPVVDLANFAITVVNDLYSWPKEIKCHLETPGSELPFNAVAVLMRHGGYSEPEAFRILYAKQAELEGEHLRQLDALRAQEGGRLPENQELYVENAQRAVCGSELWSVYTRRYPSKADLRQPEVEFVDGAFRYVADGEGAGEEKVVSESVESLPTTEVEDEFSSSDASPGSVDQAISTPPSTTFCSCEDEEEHIADVKEVCEDEADGVRDMSDISQKSKKKIDTLLPEGPGLTTYASRLEAAPDHAVIAPIKYLATLPSKGVRDTFIDALNWWLEVPEDSLRTIKTIISMLHDSSLILDDIEDDSTLRRGSPAAHMIFGTAQCINAANHIFVMVLAELQKLRSPLKTAILIATEELESLFVGQADDLHWKYHVDCPSTEDYMEMIDNKTGGLFRLCVRLLQAESTRTDVLDLDPRPFVRQLSLFFQIRDDYQNLVSDAYAKQKGFAEDLDEGKISLPIILTLQRARTRPEIMGVLKHKQPGPMAIEMKQYIVREMEKCGALESTRELLQGMQEDLIAELRRLEGDFGAKNATLELVLRRLWIS.

The interval 14-335 is terpene cyclase; that stretch reads ASSGLRSKFR…YTRRYPSKAD (322 aa). Asp95 contributes to the Mg(2+) binding site. The DDXXD 1 signature appears at 95–99; that stretch reads DDYYD. The NSE/DTE signature appears at 233 to 241; sequence NDLYSWPKE. A prenyltransferase region spans residues 336 to 759; it reads LRQPEVEFVD…LELVLRRLWI (424 aa). Residues 359-400 form a disordered region; it reads EEKVVSESVESLPTTEVEDEFSSSDASPGSVDQAISTPPSTT. The segment covering 391-400 has biased composition (polar residues); it reads QAISTPPSTT. Isopentenyl diphosphate-binding residues include Lys477, Arg480, and His509. The Mg(2+) site is built by Asp516 and Asp520. The short motif at 516–520 is the DDXXD 2 element; the sequence is DDIED. Arg525 is a binding site for dimethylallyl diphosphate. Arg526 contributes to the isopentenyl diphosphate binding site. The dimethylallyl diphosphate site is built by Lys605, Thr606, Gln643, Asn650, Lys660, and Lys670.

This sequence in the N-terminal section; belongs to the terpene synthase family. It in the C-terminal section; belongs to the FPP/GGPP synthase family. As to quaternary structure, hexamer. Mg(2+) is required as a cofactor.

The enzyme catalyses 5 isopentenyl diphosphate + dimethylallyl diphosphate = all-trans-hexaprenyl diphosphate + 5 diphosphate. It catalyses the reaction all-trans-hexaprenyl diphosphate + H2O = colleterpenol + diphosphate. Bifunctional terpene synthase that converts dimethylallyl diphosphate (DMAPP) and isopentenyl diphosphate (IPP) into colleterpenol as a single product. The C-terminal prenyltransferase (PT) domain of CgCS catalyzes formation of hexaprenyl diphosphate (HexPP), whereas the N-terminal terpene cyclase (TC) domain catalyzes the cyclization of HexPP to colleterpenol. The polypeptide is Colleterpenol synthase (Colletotrichum gloeosporioides (Anthracnose fungus)).